We begin with the raw amino-acid sequence, 515 residues long: Vesicular acetylcholine transporter (515 aa).

Over 1 to 40 the chain is Cytoplasmic; that stretch reads MGVTMAVGLAKAAMGKISSAIGERSKRISGAMNEPRRKRK. A helical membrane pass occupies residues 41 to 61; it reads ILLVIVCIAMLLDNMLYMVIV. Over 62–112 the chain is Lumenal, vesicle; sequence PIIPNYLETIRTYKLVYITTPSNGTNGSLLNSTQRAVLERNPNANEDIQIG. Residues N84, N87, and N92 are each glycosylated (N-linked (GlcNAc...) asparagine). The helical transmembrane segment at 113 to 133 threads the bilayer; sequence VLFASKAILQLLSNPFTGTFI. Over 134–139 the chain is Cytoplasmic; sequence DRVGYD. The chain crosses the membrane as a helical span at residues 140 to 160; that stretch reads IPLLIGLTIMFFSTITFAFGE. At 161 to 169 the chain is on the lumenal, vesicle side; that stretch reads SYAVLFAAR. A helical membrane pass occupies residues 170–190; that stretch reads SLQGLGSAFADTSGIAMIADK. The Cytoplasmic portion of the chain corresponds to 191 to 201; it reads YTEESERTQAL. A helical membrane pass occupies residues 202-222; it reads GIALAFISFGSLVAPPFGGVL. Over 223-229 the chain is Lumenal, vesicle; that stretch reads YQFAGKW. A helical membrane pass occupies residues 230 to 250; the sequence is VPFLVLSFVCLLDGILLLMVV. At 251-271 the chain is on the cytoplasmic side; it reads TPFASRTRENMLQGTPIYKLM. Residues 272 to 292 form a helical membrane-spanning segment; it reads IDPYIAVVAGALTTCNIPLAF. Residues 293 to 310 are Lumenal, vesicle-facing; it reads LEPTISNWMKKTMNASEW. Residue N306 is glycosylated (N-linked (GlcNAc...) asparagine). The chain crosses the membrane as a helical span at residues 311-331; the sequence is QMGITWLPAFFPHILGVYITV. Residues 332–341 are Cytoplasmic-facing; that stretch reads KLAAKYPNYQ. Residues 342-362 traverse the membrane as a helical segment; sequence WFYGAVGLVIIGASSCTIPAC. Residues 363 to 367 are Lumenal, vesicle-facing; the sequence is RNFEE. A helical transmembrane segment spans residues 368–388; the sequence is LIIPLCALCFGIALVDTALLP. The Cytoplasmic segment spans residues 389–404; it reads TLAFLVDIRYVSVYGS. The chain crosses the membrane as a helical span at residues 405-425; it reads VYAIADISYSVAYALGPIMAG. At 426–432 the chain is on the lumenal, vesicle side; it reads QIVHDLG. A helical transmembrane segment spans residues 433–453; it reads FVQLNLGMGLVNILYAPALLF. The Cytoplasmic portion of the chain corresponds to 454–515; it reads LRNVCQMKPS…VLSDQEGYSE (62 aa). The interval 489-515 is disordered; it reads AAKEPHGSSSGNHSVHAVLSDQEGYSE.

This sequence belongs to the major facilitator superfamily. Vesicular transporter family. Electric lobe.

The protein localises to the membrane. Involved in acetylcholine transport into synaptic vesicles. The polypeptide is Vesicular acetylcholine transporter (Tetronarce californica (Pacific electric ray)).